A 283-amino-acid polypeptide reads, in one-letter code: Fructose-1,6-bisphosphatase class 1 (283 aa).

Residues glutamate 67, aspartate 86, leucine 88, and aspartate 89 each coordinate Mg(2+). Substrate contacts are provided by residues 89–92 (DGSS), tyrosine 195, and lysine 225. Residue glutamate 231 participates in Mg(2+) binding.

This sequence belongs to the FBPase class 1 family. Homotetramer. Requires Mg(2+) as cofactor.

Its subcellular location is the cytoplasm. The catalysed reaction is beta-D-fructose 1,6-bisphosphate + H2O = beta-D-fructose 6-phosphate + phosphate. It functions in the pathway carbohydrate biosynthesis; gluconeogenesis. The chain is Fructose-1,6-bisphosphatase class 1 from Natronomonas pharaonis (strain ATCC 35678 / DSM 2160 / CIP 103997 / JCM 8858 / NBRC 14720 / NCIMB 2260 / Gabara) (Halobacterium pharaonis).